We begin with the raw amino-acid sequence, 384 residues long: Proteinase K (384 aa).

Positions 1–15 (MRLSVLLSLLPLALG) are cleaved as a signal peptide. Residues 16-105 (APAVEQRSEA…IEQDAVVTIN (90 aa)) constitute a propeptide that is removed on maturation. The Inhibitor I9 domain maps to 39–104 (KYIVKFKEGS…YIEQDAVVTI (66 aa)). A Peptidase S8 domain is found at 112 to 384 (PWGLARISST…NLLAYNNYQA (273 aa)). T121 contacts Ca(2+). C139 and C228 are disulfide-bonded. Active-site charge relay system residues include D144 and H174. Ca(2+)-binding residues include P280, V282, and D305. C283 and C354 form a disulfide bridge. The Charge relay system role is filled by S329. Residue D365 participates in Ca(2+) binding.

Belongs to the peptidase S8 family. Requires Ca(2+) as cofactor.

It carries out the reaction Hydrolysis of keratin, and of other proteins with subtilisin-like specificity. Hydrolyzes peptide amides.. Its function is as follows. Hydrolyzes keratin at aromatic and hydrophobic residues. The sequence is that of Proteinase K (PROK) from Parengyodontium album (Tritirachium album).